Reading from the N-terminus, the 101-residue chain is Large ribosomal subunit protein uL23 (101 aa).

The protein belongs to the universal ribosomal protein uL23 family. As to quaternary structure, part of the 50S ribosomal subunit. Contacts protein L29, and trigger factor when it is bound to the ribosome.

In terms of biological role, one of the early assembly proteins it binds 23S rRNA. One of the proteins that surrounds the polypeptide exit tunnel on the outside of the ribosome. Forms the main docking site for trigger factor binding to the ribosome. This is Large ribosomal subunit protein uL23 from Rhodococcus erythropolis (strain PR4 / NBRC 100887).